The chain runs to 149 residues: Mediator of RNA polymerase II transcription subunit 9 (149 aa).

The segment at 18 to 64 (TNPTLDKPNAEATKEEFSSAENRDEKDYLTNQQPKNLSTPSTSSNGE) is disordered. Positions 25 to 45 (PNAEATKEEFSSAENRDEKDY) are enriched in basic and acidic residues. The segment covering 46-63 (LTNQQPKNLSTPSTSSNG) has biased composition (polar residues). 2 consecutive short sequence motifs (nuclear localization signal) follow at residues 77 to 99 (RKDPNNLSNQLETLTGSIRHRLK) and 136 to 149 (KRDVLDDLYRKLQR).

Belongs to the Mediator complex subunit 9 family. Component of the Mediator complex, which is composed of at least 21 subunits that form three structurally distinct submodules. The Mediator head module contains MED6, MED8, MED11, SRB4/MED17, SRB5/MED18, ROX3/MED19, SRB2/MED20 and SRB6/MED22, the middle module contains MED1, MED4, NUT1/MED5, MED7, CSE2/MED9, NUT2/MED10, SRB7/MED21 and SOH1/MED31, and the tail module contains MED2, PGD1/MED3, RGR1/MED14, GAL11/MED15 and SIN4/MED16. The head and the middle modules interact directly with RNA polymerase II, whereas the elongated tail module interacts with gene-specific regulatory proteins. CSE2/MED9 interacts directly with MED4.

The protein resides in the nucleus. Its function is as follows. Component of the Mediator complex, a coactivator involved in the regulated transcription of nearly all RNA polymerase II-dependent genes. Mediator functions as a bridge to convey information from gene-specific regulatory proteins to the basal RNA polymerase II transcription machinery. The Mediator complex, having a compact conformation in its free form, is recruited to promoters by direct interactions with regulatory proteins and serves for the assembly of a functional preinitiation complex with RNA polymerase II and the general transcription factors. The Mediator complex unfolds to an extended conformation and partially surrounds RNA polymerase II, specifically interacting with the unphosphorylated form of the C-terminal domain (CTD) of RNA polymerase II. The Mediator complex dissociates from the RNA polymerase II holoenzyme and stays at the promoter when transcriptional elongation begins. This is Mediator of RNA polymerase II transcription subunit 9 (CSE2) from Saccharomyces cerevisiae (strain ATCC 204508 / S288c) (Baker's yeast).